A 322-amino-acid chain; its full sequence is Pyrroline-5-carboxylate reductase (322 aa).

The next 2 helical transmembrane spans lie at 9-29 and 117-137; these read YPNV…VGLL and ILIS…LHFW. Residues 302-322 are disordered; the sequence is LSQSAGSHGEDNTTDSKTSRA. An N-linked (GlcNAc...) asparagine glycan is attached at asparagine 313.

Belongs to the pyrroline-5-carboxylate reductase family.

Its subcellular location is the membrane. It catalyses the reaction L-proline + NADP(+) = (S)-1-pyrroline-5-carboxylate + NADPH + 2 H(+). The enzyme catalyses L-proline + NAD(+) = (S)-1-pyrroline-5-carboxylate + NADH + 2 H(+). The protein operates within alkaloid biosynthesis. In terms of biological role, pyrroline-5-carboxylate reductase; part of the gene cluster that mediates the biosynthesis of paraherquamide, a fungal indole alkaloid that belongs to a family of natural products containing a characteristic bicyclo[2.2.2]diazaoctane core. The first steps in the biosynthesis of paraherquamide is the production of the beta-methyl-proline precursor from L-isoleucine. They require oxidation of a terminally hydroxylated L-isoleucine to the corresponding aldehyde by enzymes which have still to be identified. Spontaneous cyclization and dehydration would yield the 4-methyl pyrolline-5-carboxylic acid, which is then reduced by the pyrroline-5-carboxylate reductase phqD leading to the beta-methyl-proline precursor. The next step of paraherquamide biosynthesis involves coupling of beta-methyl-proline and L-tryptophan by the bimodular NRPS phqB, to produce a monooxopiperazine intermediate. The reductase (R) domain of phqB utilizes NADPH for hydride transfer to reduce the thioester bond of the T domain-tethered linear dipeptide to a hemithioaminal intermediate, which spontaneously cleaves the C-S bond to release the aldehyde product. This compound undergoes spontaneous cyclization and dehydration to give a dienamine which is reverse prenylated at C-2 by the reverse prenyltransferase phqJ. The other prenyltransferase present in the cluster, phqI may be a redundant gene in the pathway. During biosynthetic assembly, the key step to produce the polycyclic core is catalyzed by the bifunctional reductase and intramolecular [4+2] Diels-Alderase, phqE, resulting in formation of the [2.2.2] diazaoctane intermediate preparaherquamide. Following formation of preparaherquamide, an indole 2,3-epoxidation-initiated pinacol-like rearrangement is catalyzed by the phqK FAD-dependent monooxygenase. The prenyltransferase phqA, the cytochrome P450 monooxygenase phqL, and the FAD-linked oxidoreductase phqH (or the cytochrome P450 monooxygenase phqM), are proposed to be involved in the formation of the pyran ring. The FAD-dependent monooxygenase phqK is likely responsible for generation of the spiro-oxindole, and the N-methylation is likely mediated by the phqN methyltransferase leading to the isolable natural product paraherquamide F. However, the order of these biosynthetic steps has still to be determined. In late-stage paraherquamide biosynthesis, the third P450 monooxygenase, phqO, is probably responsible for the C-14 hydroxylation, transforming paraherquamide F to paraherquamide G, and paraherquamide E to the final product paraherquamide A. The expansion from the 6-membered ring pyran (in paraherquamides F and G) to the 7-membered dioxepin ring (in paraherquamides A and E) represents a poorly understood but intriguing process that probably involves the 2-oxoglutarate-dependent dioxygenase phqC. Finally, the remaining members of the paraherquamide cluster, including phqI as well as phqM (or phqH), do not have a clearly prescribed role and appear to be redundant. In Penicillium fellutanum, this protein is Pyrroline-5-carboxylate reductase.